The sequence spans 737 residues: LIMR family protein R05D3.2 (737 aa).

Over residues 280-293 the composition is skewed to acidic residues; that stretch reads ADIEEENSEQSEDV. Positions 280 to 416 are disordered; the sequence is ADIEEENSEQ…PKKPKNPNFD (137 aa). Over residues 303–318 the composition is skewed to basic and acidic residues; it reads ETIHQVDRSDTPHLED.

The protein belongs to the LIMR family.

The chain is LIMR family protein R05D3.2 from Caenorhabditis elegans.